The chain runs to 522 residues: Colicin-E1 (522 aa).

2 disordered regions span residues 26 to 52 (NGTPDGSGSGGGGGKGGSKSESSAAIH) and 136 to 165 (EEKARKEAEAAEKAFQEAEQRRKEIEREKA). Residues 30–42 (DGSGSGGGGGKGG) are compositionally biased toward gly residues. A run of 2 helical transmembrane segments spans residues 471–487 (AADAGVSYVVALLFSLL) and 494–510 (IWGIAIVTGILCSYIDK).

It belongs to the channel forming colicin family.

It localises to the cell membrane. Functionally, this colicin is a channel-forming colicin. This class of transmembrane toxins depolarize the cytoplasmic membrane, leading to dissipation of cellular energy. Colicins are polypeptide toxins produced by and active against E.coli and closely related bacteria. The sequence is that of Colicin-E1 (cea) from Escherichia coli.